The primary structure comprises 487 residues: Betaine aldehyde dehydrogenase (487 aa).

K(+)-binding residues include Ser-26 and Asp-93. 150 to 152 is an NAD(+) binding site; that stretch reads GAW. The Charge relay system role is filled by Lys-162. NAD(+) contacts are provided by residues 176 to 179 and 229 to 232; these read KPSE and SVPT. Leu-244 serves as a coordination point for K(+). Glu-250 functions as the Proton acceptor in the catalytic mechanism. Positions 252, 284, and 384 each coordinate NAD(+). The active-site Nucleophile is the Cys-284. At Cys-284 the chain carries Cysteine sulfenic acid (-SOH). K(+)-binding residues include Lys-454 and Gly-457. Residue Glu-461 is the Charge relay system of the active site.

Belongs to the aldehyde dehydrogenase family. In terms of assembly, dimer of dimers. Requires K(+) as cofactor.

The catalysed reaction is betaine aldehyde + NAD(+) + H2O = glycine betaine + NADH + 2 H(+). Its pathway is amine and polyamine biosynthesis; betaine biosynthesis via choline pathway; betaine from betaine aldehyde: step 1/1. Involved in the biosynthesis of the osmoprotectant glycine betaine. Catalyzes the irreversible oxidation of betaine aldehyde to the corresponding acid. In Rhizobium leguminosarum bv. trifolii (strain WSM2304), this protein is Betaine aldehyde dehydrogenase.